We begin with the raw amino-acid sequence, 256 residues long: MRHPVVMGNWKLNGSKEMVVDLLNGLNAELEGVTGVDVAVAPPALFIDLAERTLTEAGSAIILGAQNSDLNNSGAFTGDMSPAMLKEFGATHIIIGHSERREYHNESDEFVAKKFAFLKENGLTPVLCIGESDAQNEAGETMAVCARQLDAVINTQGVEALEGAIIAYEPIWAIGTGKAATAEDAQRIHAQIRAHIAEKSEEVAKNVVIQYGGSVKPENAEAYFAQPDIDGALVGGAALDAKSFAAIAKAAAKAKA.

9-11 contributes to the substrate binding site; the sequence is NWK. Catalysis depends on histidine 97, which acts as the Electrophile. The active-site Proton acceptor is glutamate 169. Residues glycine 175, serine 214, and 235–236 contribute to the substrate site; that span reads GG.

The protein belongs to the triosephosphate isomerase family. In terms of assembly, homodimer.

It localises to the cytoplasm. The enzyme catalyses D-glyceraldehyde 3-phosphate = dihydroxyacetone phosphate. It participates in carbohydrate biosynthesis; gluconeogenesis. The protein operates within carbohydrate degradation; glycolysis; D-glyceraldehyde 3-phosphate from glycerone phosphate: step 1/1. In terms of biological role, involved in the gluconeogenesis. Catalyzes stereospecifically the conversion of dihydroxyacetone phosphate (DHAP) to D-glyceraldehyde-3-phosphate (G3P). This chain is Triosephosphate isomerase, found in Aliivibrio salmonicida (strain LFI1238) (Vibrio salmonicida (strain LFI1238)).